The following is a 115-amino-acid chain: Ribonuclease P protein component (115 aa).

It belongs to the RnpA family. Consists of a catalytic RNA component (M1 or rnpB) and a protein subunit.

The enzyme catalyses Endonucleolytic cleavage of RNA, removing 5'-extranucleotides from tRNA precursor.. Functionally, RNaseP catalyzes the removal of the 5'-leader sequence from pre-tRNA to produce the mature 5'-terminus. It can also cleave other RNA substrates such as 4.5S RNA. The protein component plays an auxiliary but essential role in vivo by binding to the 5'-leader sequence and broadening the substrate specificity of the ribozyme. This chain is Ribonuclease P protein component, found in Bacillus cereus (strain 03BB102).